Here is a 255-residue protein sequence, read N- to C-terminus: F-box/SPRY domain-containing protein 1 (255 aa).

Positions 3–51 (DPVAALCNYNVLEVIFSYLELDDLSHCSQVCKSWYHFLNDENSDVWRWH) constitute an F-box domain. The B30.2/SPRY domain occupies 61-253 (LKSDLLSSVP…VSMVYLGTPL (193 aa)).

This sequence belongs to the FBXO45/Fsn family. Component of an E3 ubiquitin ligase complex composed of hiw and Fsn.

Its subcellular location is the synapse. It participates in protein modification; protein ubiquitination. In terms of biological role, required in the presynaptic motoneuron to down-regulate the levels of wnd and restrain synaptic terminal growth at the neuromuscular junction (NMJ). This is F-box/SPRY domain-containing protein 1 from Drosophila sechellia (Fruit fly).